Here is a 193-residue protein sequence, read N- to C-terminus: Imidazoleglycerol-phosphate dehydratase (193 aa).

Belongs to the imidazoleglycerol-phosphate dehydratase family.

The protein localises to the cytoplasm. The catalysed reaction is D-erythro-1-(imidazol-4-yl)glycerol 3-phosphate = 3-(imidazol-4-yl)-2-oxopropyl phosphate + H2O. It functions in the pathway amino-acid biosynthesis; L-histidine biosynthesis; L-histidine from 5-phospho-alpha-D-ribose 1-diphosphate: step 6/9. In Saccharolobus islandicus (strain Y.G.57.14 / Yellowstone #1) (Sulfolobus islandicus), this protein is Imidazoleglycerol-phosphate dehydratase.